A 529-amino-acid chain; its full sequence is AAA ATPase forming ring-shaped complexes (529 aa).

Positions 15–62 form a coiled coil; sequence MERQDERLRSLSEANDRLMAKNHALAKALTRATQELTKAKAQLNQLAG. 253 to 258 lines the ATP pocket; that stretch reads GNGKTL.

This sequence belongs to the AAA ATPase family. In terms of assembly, homohexamer. Assembles into a hexameric ring structure.

The chain is AAA ATPase forming ring-shaped complexes from Bifidobacterium dentium (strain ATCC 27534 / DSM 20436 / JCM 1195 / Bd1).